Consider the following 394-residue polypeptide: Protein TsgA homolog (394 aa).

12 helical membrane-spanning segments follow: residues 11 to 31 (WISY…GMVM), 51 to 71 (FLNA…EIIP), 76 to 96 (LVFG…GHNL), 101 to 121 (ISMF…TFLI), 134 to 154 (LLFT…AAAI), 162 to 182 (WYWV…LTLC), 206 to 226 (MGVL…LGFI), 246 to 266 (QLVS…SFIL), 274 to 294 (IVTV…STNN), 302 to 322 (ILAL…LGSL), 334 to 354 (FILT…GPIV), and 363 to 383 (LATA…LGFF).

Belongs to the major facilitator superfamily. TsgA family.

Its subcellular location is the cell inner membrane. The protein is Protein TsgA homolog of Yersinia enterocolitica serotype O:8 / biotype 1B (strain NCTC 13174 / 8081).